A 356-amino-acid polypeptide reads, in one-letter code: Glutamine synthetase cytosolic isozyme 1-4 (356 aa).

At serine 2 the chain carries N-acetylserine. Phosphoserine is present on residues serine 2 and serine 48. The GS beta-grasp domain maps to 19-99; it reads IIAEYIWIGG…VMCDAYTPAG (81 aa). Residues 37 to 66 are disordered; it reads ARTLPGPVTDPSQLPKWNYDGSSTGQAPGD. The region spanning 106 to 356 is the GS catalytic domain; sequence KRHAAAKIFE…IAESTILWKP (251 aa).

It belongs to the glutamine synthetase family. Homooctamer. Interacts with GRF3. In terms of tissue distribution, expressed in the pericycle in the region of lateral root emergence.

The protein resides in the cytoplasm. The enzyme catalyses L-glutamate + NH4(+) + ATP = L-glutamine + ADP + phosphate + H(+). Its function is as follows. High-affinity glutamine synthetase. May contribute to the homeostatic control of glutamine synthesis in roots. This is Glutamine synthetase cytosolic isozyme 1-4 from Arabidopsis thaliana (Mouse-ear cress).